The sequence spans 468 residues: Siroheme synthase 3 (468 aa).

Residues 1-204 (MDYLPIFCRL…GDSASANQLA (204 aa)) are precorrin-2 dehydrogenase /sirohydrochlorin ferrochelatase. Residues 22–23 (EV) and 43–44 (PE) each bind NAD(+). At serine 128 the chain carries Phosphoserine. The interval 216–468 (GEVVLVGAGP…GAADAALASA (253 aa)) is uroporphyrinogen-III C-methyltransferase. An S-adenosyl-L-methionine-binding site is contributed by proline 225. Aspartate 248 serves as the catalytic Proton acceptor. The active-site Proton donor is lysine 270. S-adenosyl-L-methionine-binding positions include 301–303 (GGD), isoleucine 306, 331–332 (TA), methionine 383, and glycine 412.

In the N-terminal section; belongs to the precorrin-2 dehydrogenase / sirohydrochlorin ferrochelatase family. The protein in the C-terminal section; belongs to the precorrin methyltransferase family.

It carries out the reaction uroporphyrinogen III + 2 S-adenosyl-L-methionine = precorrin-2 + 2 S-adenosyl-L-homocysteine + H(+). The catalysed reaction is precorrin-2 + NAD(+) = sirohydrochlorin + NADH + 2 H(+). It catalyses the reaction siroheme + 2 H(+) = sirohydrochlorin + Fe(2+). Its pathway is cofactor biosynthesis; adenosylcobalamin biosynthesis; precorrin-2 from uroporphyrinogen III: step 1/1. It participates in cofactor biosynthesis; adenosylcobalamin biosynthesis; sirohydrochlorin from precorrin-2: step 1/1. The protein operates within porphyrin-containing compound metabolism; siroheme biosynthesis; precorrin-2 from uroporphyrinogen III: step 1/1. It functions in the pathway porphyrin-containing compound metabolism; siroheme biosynthesis; siroheme from sirohydrochlorin: step 1/1. Its pathway is porphyrin-containing compound metabolism; siroheme biosynthesis; sirohydrochlorin from precorrin-2: step 1/1. Functionally, multifunctional enzyme that catalyzes the SAM-dependent methylations of uroporphyrinogen III at position C-2 and C-7 to form precorrin-2 via precorrin-1. Then it catalyzes the NAD-dependent ring dehydrogenation of precorrin-2 to yield sirohydrochlorin. Finally, it catalyzes the ferrochelation of sirohydrochlorin to yield siroheme. The protein is Siroheme synthase 3 of Aeromonas hydrophila subsp. hydrophila (strain ATCC 7966 / DSM 30187 / BCRC 13018 / CCUG 14551 / JCM 1027 / KCTC 2358 / NCIMB 9240 / NCTC 8049).